A 330-amino-acid polypeptide reads, in one-letter code: Aquaporin Lacbi1:307192 (330 aa).

Residues 1–40 (MSATPIIHLRDVKKRTGVLNAWERVRNKPQVHWAMECFAE) are Cytoplasmic-facing. The chain crosses the membrane as a helical span at residues 41–61 (ALGVFFYVYFGLGSTAAWVIG). At 62 to 71 (NILKQSGLSS) the chain is on the extracellular side. Residues 72–92 (VFQIGFAYAFGILFAIGVCAA) form a helical membrane-spanning segment. Over 93 to 124 (TSGGHFNPCVTIAFTIFRGFPPLKAVRYIVAQ) the chain is Cytoplasmic. The NPA 1 motif lies at 99-101 (NPC). A helical transmembrane segment spans residues 125-145 (ILGAYIASALVYNQWKVLIVE). The Extracellular segment spans residues 146-157 (SELLLKQAGVYE). A helical membrane pass occupies residues 158–178 (TTMFTPNGPAGIFALYLLPGA). Residues 179-183 (QTLPR) are Cytoplasmic-facing. Residues 184–204 (AFLNEFVNCFVLALVIWAALD) traverse the membrane as a helical segment. The Extracellular segment spans residues 205-207 (PTS). Residues 208–228 (FMIPPVMAPFIIAAAYAGSIW) form a helical membrane-spanning segment. The Cytoplasmic portion of the chain corresponds to 229-264 (GYAVPAISLNSARDIGCRLFALTIWGKSAAGGSYSA). The NPA 2 signature appears at 238-240 (NSA). The helical transmembrane segment at 265 to 285 (ITALVNIPATLLAAVVYELFL) threads the bilayer. Residues 286–330 (VDSDRVVAGSHLEFMNVAANHRRHRHQAEDDNHGDADDSSQEKPV) lie on the Extracellular side of the membrane. The segment at 308-330 (RHRHQAEDDNHGDADDSSQEKPV) is disordered. The segment covering 312–330 (QAEDDNHGDADDSSQEKPV) has biased composition (basic and acidic residues).

The protein belongs to the MIP/aquaporin (TC 1.A.8) family.

The protein localises to the membrane. Functionally, water channel-like protein that does not show transport of water nor ammonium across membranes. This Laccaria bicolor (strain S238N-H82 / ATCC MYA-4686) (Bicoloured deceiver) protein is Aquaporin Lacbi1:307192.